The sequence spans 161 residues: Succinate dehydrogenase assembly factor 2, mitochondrial (161 aa).

A mitochondrion-targeting transit peptide spans 1–31; that stretch reads MSLLRVTRSSGHLSAVCRLPARSISTTSILL.

This sequence belongs to the SDHAF2 family. Interacts with the flavoprotein subunit within the SDH catalytic dimer.

It is found in the mitochondrion matrix. Functionally, plays an essential role in the assembly of succinate dehydrogenase (SDH), an enzyme complex (also referred to as respiratory complex II) that is a component of both the tricarboxylic acid (TCA) cycle and the mitochondrial electron transport chain, and which couples the oxidation of succinate to fumarate with the reduction of ubiquinone (coenzyme Q) to ubiquinol. Required for flavinylation (covalent attachment of FAD) of the flavoprotein subunit of the SDH catalytic dimer. The protein is Succinate dehydrogenase assembly factor 2, mitochondrial of Aedes aegypti (Yellowfever mosquito).